The primary structure comprises 416 residues: Lipase (416 aa).

The N-terminal stretch at 1–28 (MKCCRIMFVLLGLWFVFGLSVPGGRTEA) is a signal peptide. S141 serves as the catalytic Nucleophile. G314 contributes to the Ca(2+) binding site. Residue D345 is the Charge relay system of the active site. D385 is a binding site for Ca(2+). The Charge relay system role is filled by H386. Positions 388, 393, and 394 each coordinate Ca(2+).

The protein belongs to the AB hydrolase superfamily. As to quaternary structure, homodimer.

It is found in the secreted. It carries out the reaction a triacylglycerol + H2O = a diacylglycerol + a fatty acid + H(+). Its activity is regulated as follows. Activity is inhibited by zinc and iron ions, and activated in vitro in 25% v/v DMSO and acetone. In terms of biological role, triacylglycerol hydrolase that shows hydrolysis preference towards some of the natural oils such as olive, sunflower and corn oils. The sequence is that of Lipase from Bacillus sp.